The chain runs to 445 residues: GTPase Der (445 aa).

EngA-type G domains lie at 3–167 (PVIA…YAGQ) and 180–353 (IKIA…AAAM). GTP contacts are provided by residues 9-16 (GRPNVGKS), 56-60 (DTGGF), 119-122 (NKAE), 186-193 (GRPNVGKS), 233-237 (DTAGL), and 298-301 (NKWD). In terms of domain architecture, KH-like spans 354-438 (AKLPTPKLTR…PLRIEFRSSN (85 aa)).

This sequence belongs to the TRAFAC class TrmE-Era-EngA-EngB-Septin-like GTPase superfamily. EngA (Der) GTPase family. In terms of assembly, associates with the 50S ribosomal subunit.

In terms of biological role, GTPase that plays an essential role in the late steps of ribosome biogenesis. This Burkholderia ambifaria (strain ATCC BAA-244 / DSM 16087 / CCUG 44356 / LMG 19182 / AMMD) (Burkholderia cepacia (strain AMMD)) protein is GTPase Der.